Consider the following 305-residue polypeptide: Aspartate carbamoyltransferase catalytic subunit (305 aa).

Residues Arg-56 and Thr-57 each coordinate carbamoyl phosphate. Lys-85 contributes to the L-aspartate binding site. Residues Arg-106, His-134, and Gln-137 each contribute to the carbamoyl phosphate site. L-aspartate-binding residues include Arg-167 and Arg-227. Positions 266 and 267 each coordinate carbamoyl phosphate.

This sequence belongs to the aspartate/ornithine carbamoyltransferase superfamily. ATCase family. As to quaternary structure, heterooligomer of catalytic and regulatory chains.

It catalyses the reaction carbamoyl phosphate + L-aspartate = N-carbamoyl-L-aspartate + phosphate + H(+). The protein operates within pyrimidine metabolism; UMP biosynthesis via de novo pathway; (S)-dihydroorotate from bicarbonate: step 2/3. In terms of biological role, catalyzes the condensation of carbamoyl phosphate and aspartate to form carbamoyl aspartate and inorganic phosphate, the committed step in the de novo pyrimidine nucleotide biosynthesis pathway. The protein is Aspartate carbamoyltransferase catalytic subunit of Thermoplasma volcanium (strain ATCC 51530 / DSM 4299 / JCM 9571 / NBRC 15438 / GSS1).